A 215-amino-acid chain; its full sequence is Ribose-5-phosphate isomerase A (215 aa).

Substrate contacts are provided by residues 26 to 29, 79 to 82, and 92 to 95; these read TGST, DGAD, and KGGG. The active-site Proton acceptor is glutamate 101. Position 119 (lysine 119) interacts with substrate.

The protein belongs to the ribose 5-phosphate isomerase family. In terms of assembly, homodimer.

The enzyme catalyses aldehydo-D-ribose 5-phosphate = D-ribulose 5-phosphate. The protein operates within carbohydrate degradation; pentose phosphate pathway; D-ribose 5-phosphate from D-ribulose 5-phosphate (non-oxidative stage): step 1/1. Functionally, catalyzes the reversible conversion of ribose-5-phosphate to ribulose 5-phosphate. This Xanthomonas campestris pv. campestris (strain 8004) protein is Ribose-5-phosphate isomerase A.